The sequence spans 315 residues: Calumenin (315 aa).

Residues 1–19 form the signal peptide; sequence MDLRQFLMCLSLCTAFALS. S44 carries the post-translational modification Phosphoserine. Y47 carries the post-translational modification Phosphotyrosine. T65 is modified (phosphothreonine). 6 EF-hand domains span residues 68-103, 104-139, 151-186, 188-223, 229-264, and 265-300; these read ESKE…AQKK, YIYD…TYLD, QMMV…EEYD, MKDI…HDGN, WVKT…SDYD, and HAEA…FVGS. S69 is subject to Phosphoserine. Residues D81, D83, D85, E92, D117, N119, D121, and E128 each coordinate Ca(2+). Residue N131 is glycosylated (N-linked (GlcNAc...) asparagine). Position 164 (D164) interacts with Ca(2+). N6-acetyllysine is present on K165. Residues D166, D168, E175, D201, N203, D205, E212, D242, N244, D246, K248, and E253 each contribute to the Ca(2+) site. T254 is subject to Phosphothreonine. S261 and S277 each carry phosphoserine. 5 residues coordinate Ca(2+): D278, N280, D282, K284, and E289. Residues 312–315 carry the Prevents secretion from ER motif; the sequence is HDEF.

This sequence belongs to the CREC family. In terms of assembly, interacts with GGCX.

It localises to the endoplasmic reticulum membrane. The protein localises to the golgi apparatus. The protein resides in the secreted. It is found in the melanosome. Its subcellular location is the sarcoplasmic reticulum lumen. Functionally, involved in regulation of vitamin K-dependent carboxylation of multiple N-terminal glutamate residues. Seems to inhibit gamma-carboxylase GGCX. Binds 7 calcium ions with a low affinity. The protein is Calumenin (CALU) of Bos taurus (Bovine).